The chain runs to 552 residues: AP-1-like transcription factor (552 aa).

The segment covering 1 to 14 has biased composition (polar residues); the sequence is MSGQTETLSSTSNI. A disordered region spans residues 1 to 99; sequence MSGQTETLSS…QRAFRKRKED (99 aa). Basic and acidic residues predominate over residues 36–47; it reads PVSDRSSRRTSS. A compositionally biased stretch (acidic residues) spans 48–61; sequence EEVDLMPNVDDEVD. Residues 62–80 show a composition bias toward basic and acidic residues; the sequence is GDVKPKKIGRKNSDQEPSS. The bZIP domain occupies 76–139; sequence QEPSSKRKAQ…RQLEEELRIL (64 aa). Positions 81-88 match the Nuclear localization signal motif; sequence KRKAQNRA. The basic motif stretch occupies residues 81–102; that stretch reads KRKAQNRAAQRAFRKRKEDHLK. The segment at 104–111 is leucine-zipper; that stretch reads LETQVVTL. The segment at 213–244 is disordered; the sequence is QVPPTLVDSNSAQGTLSPETPSSSDSPSNLYL. Residues 219 to 228 are compositionally biased toward polar residues; the sequence is VDSNSAQGTL. The segment covering 229-240 has biased composition (low complexity); the sequence is SPETPSSSDSPS. Residues 259-290 form a n-CRD region; sequence CSALSNGENGEDVADGKQFCQKLSTACGSIAC. 2 cysteine pairs are disulfide-bonded: Cys-278-Cys-501 and Cys-285-Cys-532. Positions 460 to 489 are disordered; sequence ISNHPDEVPPDGLPQKGKHDTSSQMPSENE. A c-CRD region spans residues 501–532; sequence CPKVWSKIINHPRFESFDIDDLCSKLKNKAKC. The Nuclear export signal motif lies at 515–533; it reads ESFDIDDLCSKLKNKAKCS.

Belongs to the bZIP family. YAP subfamily. Homodimer. The reduced form of pap1 interacts in the nucleus with the nuclear export protein crm1, and in the cytoplasm with the peroxiredoxin tpx1. In terms of processing, depending on the oxidative stress inducing agent, pap1 can undergo two distinct conformational changes, both masking the nuclear export signal, thus abolishing nuclear export by crm1/exportin 1. The glutathione-depleting agent diethylmaleate (DEM) leads to the non-reversible modification of at least 2 cysteine residues in the c-CRD. Peroxide stress induces the formation of a tpx1-dependent interdomain disulfide bond between Cys-278 and Cys-501.

It is found in the nucleus. The protein localises to the cytoplasm. In terms of biological role, transcription activator involved in multidrug resistance, oxidative stress response, and redox homeostasis. Regulates the transcription of genes encoding antioxidant enzymes like catalase ctt1 and components of the cellular thiol-reducing pathways, including the thioredoxin system (trx2, trr1), ABC transporters involved in multidrug resistance like bfr1/hba2 and pmd1 as well as the gene obr1/apt1. Preferentially binds to promoters with the core binding site 5'-TTA[CG]TAA-3'. Activity of the transcription factor is controlled through oxidation of specific cysteine residues resulting in the alteration of its subcellular location. Oxidative stress induces nuclear accumulation and as a result pap1 transcriptional activity. Required for sty1/spc1-conferred staurosporine resistance. In Schizosaccharomyces pombe (strain 972 / ATCC 24843) (Fission yeast), this protein is AP-1-like transcription factor (pap1).